The following is a 384-amino-acid chain: S-adenosylmethionine synthase (384 aa).

His-15 serves as a coordination point for ATP. A Mg(2+)-binding site is contributed by Asp-17. Glu-43 contacts K(+). Residues Glu-56 and Gln-99 each coordinate L-methionine. The segment at 99 to 109 (QSPDINQGVDR) is flexible loop. ATP is bound by residues 164-166 (DAK), 230-231 (RF), Asp-239, 245-246 (RK), Ala-262, and Lys-266. Asp-239 is a binding site for L-methionine. Residue Lys-270 participates in L-methionine binding.

This sequence belongs to the AdoMet synthase family. In terms of assembly, homotetramer; dimer of dimers. Requires Mg(2+) as cofactor. It depends on K(+) as a cofactor.

It is found in the cytoplasm. The enzyme catalyses L-methionine + ATP + H2O = S-adenosyl-L-methionine + phosphate + diphosphate. It participates in amino-acid biosynthesis; S-adenosyl-L-methionine biosynthesis; S-adenosyl-L-methionine from L-methionine: step 1/1. Catalyzes the formation of S-adenosylmethionine (AdoMet) from methionine and ATP. The overall synthetic reaction is composed of two sequential steps, AdoMet formation and the subsequent tripolyphosphate hydrolysis which occurs prior to release of AdoMet from the enzyme. The polypeptide is S-adenosylmethionine synthase (Salmonella arizonae (strain ATCC BAA-731 / CDC346-86 / RSK2980)).